A 284-amino-acid chain; its full sequence is RNase adapter protein RapZ (284 aa).

8–15 (GRSGSGKS) contacts ATP. 56–59 (DVRN) contacts GTP. The interval 266-284 (RSRGKNAQSRHRTLEKSKS) is RNA-binding.

This sequence belongs to the RapZ-like family. RapZ subfamily. Homotrimer.

In terms of biological role, modulates the synthesis of GlmS, by affecting the processing and stability of the regulatory small RNA GlmZ. When glucosamine-6-phosphate (GlcN6P) concentrations are high in the cell, RapZ binds GlmZ and targets it to cleavage by RNase E. Consequently, GlmZ is inactivated and unable to activate GlmS synthesis. Under low GlcN6P concentrations, RapZ is sequestered and inactivated by an other regulatory small RNA, GlmY, preventing GlmZ degradation and leading to synthesis of GlmS. This chain is RNase adapter protein RapZ, found in Sodalis glossinidius (strain morsitans).